Here is a 50-residue protein sequence, read N- to C-terminus: Small ribosomal subunit protein uS14 (50 aa).

Residues C15, C18, C33, and C36 each coordinate Zn(2+).

Belongs to the universal ribosomal protein uS14 family. Zinc-binding uS14 subfamily. Part of the 30S ribosomal subunit. The cofactor is Zn(2+).

Functionally, binds 16S rRNA, required for the assembly of 30S particles. The chain is Small ribosomal subunit protein uS14 from Methanosarcina mazei (strain ATCC BAA-159 / DSM 3647 / Goe1 / Go1 / JCM 11833 / OCM 88) (Methanosarcina frisia).